The sequence spans 268 residues: 2,5-diamino-6-ribosylamino-4(3H)-pyrimidinone 5'-phosphate reductase (268 aa).

Residues Thr-68, Asp-72, 103–106 (SNLR), and 191–195 (GAELL) each bind NADP(+).

This sequence belongs to the HTP reductase family. In terms of assembly, homodimer.

It catalyses the reaction 2,5-diamino-6-(1-D-ribitylamino)pyrimidin-4(3H)-one 5'-phosphate + NADP(+) = 2,5-diamino-6-(1-D-ribosylamino)pyrimidin-4(3H)-one 5'-phosphate + NADPH + H(+). It carries out the reaction 2,5-diamino-6-(1-D-ribitylamino)pyrimidin-4(3H)-one 5'-phosphate + NAD(+) = 2,5-diamino-6-(1-D-ribosylamino)pyrimidin-4(3H)-one 5'-phosphate + NADH + H(+). Its pathway is cofactor biosynthesis; riboflavin biosynthesis. Catalyzes an early step in riboflavin biosynthesis, the NADPH-dependent reduction of the ribose side chain of 2,5-diamino-6-ribosylamino-4(3H)-pyrimidinone 5'-phosphate, yielding 2,5-diamino-6-ribitylamino-4(3H)-pyrimidinone 5'-phosphate. This chain is 2,5-diamino-6-ribosylamino-4(3H)-pyrimidinone 5'-phosphate reductase, found in Schizosaccharomyces pombe (strain 972 / ATCC 24843) (Fission yeast).